Here is a 314-residue protein sequence, read N- to C-terminus: Methionyl-tRNA formyltransferase (314 aa).

113 to 116 (SLLP) contacts (6S)-5,6,7,8-tetrahydrofolate.

It belongs to the Fmt family.

It catalyses the reaction L-methionyl-tRNA(fMet) + (6R)-10-formyltetrahydrofolate = N-formyl-L-methionyl-tRNA(fMet) + (6S)-5,6,7,8-tetrahydrofolate + H(+). Functionally, attaches a formyl group to the free amino group of methionyl-tRNA(fMet). The formyl group appears to play a dual role in the initiator identity of N-formylmethionyl-tRNA by promoting its recognition by IF2 and preventing the misappropriation of this tRNA by the elongation apparatus. This is Methionyl-tRNA formyltransferase from Stutzerimonas stutzeri (strain A1501) (Pseudomonas stutzeri).